Here is a 499-residue protein sequence, read N- to C-terminus: Long chain base biosynthesis protein 2b (499 aa).

Residues 5–25 traverse the membrane as a helical segment; the sequence is VPYVTAATTLFSFGLIFGFGH. Lys-322 carries the post-translational modification N6-(pyridoxal phosphate)lysine.

The protein belongs to the class-II pyridoxal-phosphate-dependent aminotransferase family. In terms of assembly, heterodimer with LCB1. Component of the serine palmitoyltransferase (SPT) complex, composed of LCB1 and LCB2. Pyridoxal 5'-phosphate serves as cofactor.

The protein localises to the endoplasmic reticulum membrane. The catalysed reaction is L-serine + hexadecanoyl-CoA + H(+) = 3-oxosphinganine + CO2 + CoA. It participates in lipid metabolism; sphingolipid metabolism. Functionally, serine palmitoyltransferase (SPT). The heterodimer formed with LCB1 constitutes the catalytic core. The chain is Long chain base biosynthesis protein 2b from Oryza sativa subsp. japonica (Rice).